A 403-amino-acid chain; its full sequence is MFACDELLLNASTIDATGLQLYNQAIVIRKGRIEWCGSEDQLPVHFQESAKSRKDCHGQLITPGLIDCHTHLVYAGHRAAEFRLKSQGVSYADIAKSGGGILSTVQMTRDASEEELIDQSLPRLLALKNEGVTTVEIKSGYGLDLQNELKMLRVARQLGDMAGVRVKTTFLGAHAVGPEFKGNSQAYVDFLCNEMLPAAKNMDLVDAVDVFCESIAFSIRQAEQIFQAAKNLNLPIKCHAEQLSNMGASSLAARYGALSCDHLEFLDENGALNMVKANTVAVLLPGAFYFLKEKQKPPVDLLRQVGVGMAIATDSNPGSSPTTSLLLMMSMACQFFSMSIPEVLSAVTYQASRALGMEKDIGSIEAGKIADLVLWSIKDSAALCYYFAYPLPHQTMVAGEWVS.

Residues histidine 69 and histidine 71 each contribute to the Fe(3+) site. Residues histidine 69 and histidine 71 each contribute to the Zn(2+) site. 4-imidazolone-5-propanoate contacts are provided by arginine 78, tyrosine 141, and histidine 174. Tyrosine 141 lines the N-formimidoyl-L-glutamate pocket. Histidine 239 is a Fe(3+) binding site. Histidine 239 is a Zn(2+) binding site. Residue glutamine 242 coordinates 4-imidazolone-5-propanoate. Aspartate 314 lines the Fe(3+) pocket. A Zn(2+)-binding site is contributed by aspartate 314. The N-formimidoyl-L-glutamate site is built by asparagine 316 and glycine 318. Serine 319 contributes to the 4-imidazolone-5-propanoate binding site.

Belongs to the metallo-dependent hydrolases superfamily. HutI family. Requires Zn(2+) as cofactor. Fe(3+) is required as a cofactor.

It localises to the cytoplasm. It catalyses the reaction 4-imidazolone-5-propanoate + H2O = N-formimidoyl-L-glutamate. Its pathway is amino-acid degradation; L-histidine degradation into L-glutamate; N-formimidoyl-L-glutamate from L-histidine: step 3/3. Catalyzes the hydrolytic cleavage of the carbon-nitrogen bond in imidazolone-5-propanoate to yield N-formimidoyl-L-glutamate. It is the third step in the universal histidine degradation pathway. This is Imidazolonepropionase from Legionella pneumophila (strain Lens).